A 678-amino-acid chain; its full sequence is Protein CASP (678 aa).

Topologically, residues 1–619 (MAANVGSMFQ…LVLSNKMART (619 aa)) are cytoplasmic. Coiled coils occupy residues 67–450 (LLKS…QDLS) and 502–556 (LSII…FLQS). Residue Ser-586 is modified to Phosphoserine. Residues 620-640 (IGFFYTLFLHCLVFLVLYKLA) traverse the membrane as a helical; Anchor for type IV membrane protein segment. Topologically, residues 641–678 (WSESMERDCATFCAKKFADHLHKFHENDNGAAAGDLWQ) are lumenal.

Belongs to the CASP family. As to quaternary structure, homodimer; disulfide-linked. Interacts with GOLGA5.

It is found in the golgi apparatus membrane. In terms of biological role, may be involved in intra-Golgi retrograde transport. This Pongo abelii (Sumatran orangutan) protein is Protein CASP (CUTL1).